A 109-amino-acid chain; its full sequence is Cell division suppressor protein YneA (109 aa).

The LysM domain occupies Ser40–Ile94.

The protein belongs to the YneA family.

The protein localises to the cytoplasm. Its function is as follows. Inhibits cell division during the SOS response. Affects a later stage of the cell division protein assembly, after the assembly of the Z ring, by probably suppressing recruitment of FtsL and/or DivIC to the division machinery. In Priestia megaterium (strain DSM 319 / IMG 1521) (Bacillus megaterium), this protein is Cell division suppressor protein YneA.